The following is a 445-amino-acid chain: Glucose-6-phosphate isomerase (445 aa).

Catalysis depends on glutamate 284, which acts as the Proton donor. Active-site residues include histidine 305 and lysine 419.

This sequence belongs to the GPI family.

The protein resides in the cytoplasm. It carries out the reaction alpha-D-glucose 6-phosphate = beta-D-fructose 6-phosphate. It participates in carbohydrate biosynthesis; gluconeogenesis. It functions in the pathway carbohydrate degradation; glycolysis; D-glyceraldehyde 3-phosphate and glycerone phosphate from D-glucose: step 2/4. Catalyzes the reversible isomerization of glucose-6-phosphate to fructose-6-phosphate. The sequence is that of Glucose-6-phosphate isomerase from Leptospira interrogans serogroup Icterohaemorrhagiae serovar Lai (strain 56601).